The chain runs to 444 residues: CCA-adding enzyme (444 aa).

Positions 57 and 60 each coordinate ATP. 2 residues coordinate CTP: Ser-57 and Arg-60. The Mg(2+) site is built by Asp-69, Asp-71, and Asp-124. ATP contacts are provided by His-147, Lys-168, and Tyr-177. His-147, Lys-168, and Tyr-177 together coordinate CTP.

It belongs to the tRNA nucleotidyltransferase/poly(A) polymerase family. Archaeal CCA-adding enzyme subfamily. Homodimer. Mg(2+) serves as cofactor.

The catalysed reaction is a tRNA precursor + 2 CTP + ATP = a tRNA with a 3' CCA end + 3 diphosphate. The enzyme catalyses a tRNA with a 3' CCA end + 2 CTP + ATP = a tRNA with a 3' CCACCA end + 3 diphosphate. Catalyzes the addition and repair of the essential 3'-terminal CCA sequence in tRNAs without using a nucleic acid template. Adds these three nucleotides in the order of C, C, and A to the tRNA nucleotide-73, using CTP and ATP as substrates and producing inorganic pyrophosphate. tRNA 3'-terminal CCA addition is required both for tRNA processing and repair. Also involved in tRNA surveillance by mediating tandem CCA addition to generate a CCACCA at the 3' terminus of unstable tRNAs. While stable tRNAs receive only 3'-terminal CCA, unstable tRNAs are marked with CCACCA and rapidly degraded. In Methanococcus maripaludis (strain C7 / ATCC BAA-1331), this protein is CCA-adding enzyme.